Reading from the N-terminus, the 355-residue chain is S-adenosylmethionine:tRNA ribosyltransferase-isomerase (355 aa).

This sequence belongs to the QueA family. As to quaternary structure, monomer.

It is found in the cytoplasm. The enzyme catalyses 7-aminomethyl-7-carbaguanosine(34) in tRNA + S-adenosyl-L-methionine = epoxyqueuosine(34) in tRNA + adenine + L-methionine + 2 H(+). Its pathway is tRNA modification; tRNA-queuosine biosynthesis. In terms of biological role, transfers and isomerizes the ribose moiety from AdoMet to the 7-aminomethyl group of 7-deazaguanine (preQ1-tRNA) to give epoxyqueuosine (oQ-tRNA). The sequence is that of S-adenosylmethionine:tRNA ribosyltransferase-isomerase from Burkholderia ambifaria (strain ATCC BAA-244 / DSM 16087 / CCUG 44356 / LMG 19182 / AMMD) (Burkholderia cepacia (strain AMMD)).